The chain runs to 540 residues: Beta-secretase (540 aa).

Residues 1-31 (MHFSLPTSRIVVVVPAAAICIVCVLIETCTA) form the signal peptide. A Peptidase A1 domain is found at 81–435 (YYIEVDIGTP…DRENKRVGFA (355 aa)). Catalysis depends on residues D99 and D302. Disulfide bonds link C222-C439, C291-C469, and C345-C397. Residues 483–503 (ITAYVLAAICLVCLIPVIVFA) traverse the membrane as a helical segment. Over 504–540 (LTHQINKRCKGRRGRGVVNHHRLDQEGLAENEPNSDP) the chain is Cytoplasmic.

The protein belongs to the peptidase A1 family.

The protein resides in the membrane. This chain is Beta-secretase, found in Strongylocentrotus purpuratus (Purple sea urchin).